Consider the following 288-residue polypeptide: MCKKRNAEINAEFDIIKKYCIYIGNIPFFASKNDVVVKFAEYGETCNIYMQSNKPHCDVKPAIVRYRSRKSVDKSLCLNNSKFGNTILIVLPLSLPYSRYLLTYDTCIVVYINDKNSCKTSMAELYDEFQKIGDIQNMFKTTNNMIYINFESEKSMQLSLATKPFLINNNIFKIKKVERNINMCGLNSESQDFSTNLKKKLLYNRSIGIFGLPSNATEERIAQIFSRFGDIQKITLICDVVGNSKQYGFIYYKKRTSANAAKVIMDGENFEGNKISVRFVPEKKVFKN.

3 consecutive RRM domains span residues 19–94 (YCIY…LPLS), 108–179 (IVVY…KVER), and 205–282 (RSIG…FVPE).

Its function is as follows. Male determiner protein (M-factor) that controls male somatic sexual differentiation. Acts as a dominant factor that regulates the mRNA splicing of doublesex (dsx) or fruitless (fru) transcripts and promotes expression of male splice forms of dsx and fru. The chain is Male determiner protein Nix from Aedes aegypti (Yellowfever mosquito).